An 889-amino-acid chain; its full sequence is DNA mismatch repair protein MutS (889 aa).

620 to 627 (GPNMAGKS) provides a ligand contact to ATP. The interval 812-831 (AAAPSGAARRGRPAREKEPG) is disordered.

The protein belongs to the DNA mismatch repair MutS family.

This protein is involved in the repair of mismatches in DNA. It is possible that it carries out the mismatch recognition step. This protein has a weak ATPase activity. The polypeptide is DNA mismatch repair protein MutS (Syntrophobacter fumaroxidans (strain DSM 10017 / MPOB)).